The chain runs to 228 residues: N-acylneuraminate cytidylyltransferase (228 aa).

Belongs to the CMP-NeuNAc synthase family.

Its subcellular location is the cytoplasm. The catalysed reaction is an N-acylneuraminate + CTP = a CMP-N-acyl-beta-neuraminate + diphosphate. The chain is N-acylneuraminate cytidylyltransferase (neuA) from Neisseria meningitidis serogroup B (strain ATCC BAA-335 / MC58).